The sequence spans 382 residues: ATP phosphoribosyltransferase regulatory subunit (382 aa).

It belongs to the class-II aminoacyl-tRNA synthetase family. HisZ subfamily. In terms of assembly, heteromultimer composed of HisG and HisZ subunits.

It is found in the cytoplasm. It participates in amino-acid biosynthesis; L-histidine biosynthesis; L-histidine from 5-phospho-alpha-D-ribose 1-diphosphate: step 1/9. Its function is as follows. Required for the first step of histidine biosynthesis. May allow the feedback regulation of ATP phosphoribosyltransferase activity by histidine. In Burkholderia pseudomallei (strain K96243), this protein is ATP phosphoribosyltransferase regulatory subunit.